A 427-amino-acid chain; its full sequence is Serine--tRNA ligase (427 aa).

231–233 (TAE) contributes to the L-serine binding site. 262–264 (RSE) is an ATP binding site. Glutamate 285 contacts L-serine. 349–352 (EISS) provides a ligand contact to ATP. Serine 385 provides a ligand contact to L-serine.

It belongs to the class-II aminoacyl-tRNA synthetase family. Type-1 seryl-tRNA synthetase subfamily. In terms of assembly, homodimer. The tRNA molecule binds across the dimer.

It is found in the cytoplasm. The catalysed reaction is tRNA(Ser) + L-serine + ATP = L-seryl-tRNA(Ser) + AMP + diphosphate + H(+). The enzyme catalyses tRNA(Sec) + L-serine + ATP = L-seryl-tRNA(Sec) + AMP + diphosphate + H(+). It participates in aminoacyl-tRNA biosynthesis; selenocysteinyl-tRNA(Sec) biosynthesis; L-seryl-tRNA(Sec) from L-serine and tRNA(Sec): step 1/1. Functionally, catalyzes the attachment of serine to tRNA(Ser). Is also able to aminoacylate tRNA(Sec) with serine, to form the misacylated tRNA L-seryl-tRNA(Sec), which will be further converted into selenocysteinyl-tRNA(Sec). This Methylococcus capsulatus (strain ATCC 33009 / NCIMB 11132 / Bath) protein is Serine--tRNA ligase.